Here is a 96-residue protein sequence, read N- to C-terminus: MEQAPADQGPQREPHNEWTLELLEELKQEAVRHFPRIWLHSLGQHIYETYGDTWEGVEAIIRSLQQLLFIHFRIGCQHSRIGITRQRRARNGSSRS.

The interval 1–42 (MEQAPADQGPQREPHNEWTLELLEELKQEAVRHFPRIWLHSL) is homooligomerization. Residues S79, S94, and S96 each carry the phosphoserine; by host modification.

The protein belongs to the HIV-1 VPR protein family. Homooligomer, may form homodimer. Interacts with p6-gag region of the Pr55 Gag precursor protein through a (Leu-X-X)4 motif near the C-terminus of the P6gag protein. Interacts with host UNG. May interact with host RAD23A/HHR23A. Interacts with host VPRBP/DCAF1, leading to hijack the CUL4A-RBX1-DDB1-DCAF1/VPRBP complex, mediating ubiquitination of host proteins such as TERT and ZGPAT and arrest of the cell cycle in G2 phase. In terms of processing, phosphorylated on several residues by host. These phosphorylations regulate VPR activity for the nuclear import of the HIV-1 pre-integration complex.

It localises to the virion. The protein resides in the host nucleus. Its subcellular location is the host extracellular space. Its function is as follows. During virus replication, may deplete host UNG protein, and incude G2-M cell cycle arrest. Acts by targeting specific host proteins for degradation by the 26S proteasome, through association with the cellular CUL4A-DDB1 E3 ligase complex by direct interaction with host VPRPB/DCAF-1. Cell cycle arrest reportedly occurs within hours of infection and is not blocked by antiviral agents, suggesting that it is initiated by the VPR carried into the virion. Additionally, VPR induces apoptosis in a cell cycle dependent manner suggesting that these two effects are mechanistically linked. Detected in the serum and cerebrospinal fluid of AIDS patient, VPR may also induce cell death to bystander cells. During virus entry, plays a role in the transport of the viral pre-integration (PIC) complex to the host nucleus. This function is crucial for viral infection of non-dividing macrophages. May act directly at the nuclear pore complex, by binding nucleoporins phenylalanine-glycine (FG)-repeat regions. The chain is Protein Vpr from Homo sapiens (Human).